The following is a 454-amino-acid chain: Repulsive guidance molecule A (454 aa).

Residues 1-47 form the signal peptide; the sequence is MQPPRERLVVTGRAGWMGMGRGAGRSALGLWPTLAFLLCSFPAAISP. Positions 48 to 169 are cleaved as a propeptide — removed in mature form; the sequence is CKILKCNSEF…NYTHCGLFGD (122 aa). Residues 114–126 are compositionally biased toward polar residues; that stretch reads HNCSKDGPTSQPR. Residues 114–141 form a disordered region; that stretch reads HNCSKDGPTSQPRVRTLPPAGDSQERSD. N-linked (GlcNAc...) asparagine glycans are attached at residues asparagine 115 and asparagine 160. Disulfide bonds link cysteine 146–cysteine 227 and cysteine 164–cysteine 316. A glycan (N-linked (GlcNAc...) asparagine) is linked at asparagine 388. Alanine 427 carries the GPI-anchor amidated alanine lipid modification. Positions 428-454 are cleaved as a propeptide — removed in mature form; that stretch reads AAATTFPLAPQILLGTIPLLVLLPVLW.

The protein belongs to the repulsive guidance molecule (RGM) family. Interacts with NEO1, BMP2 and BMP4. Autocatalytically cleaved at low pH; the two chains remain linked via two disulfide bonds. Expressed in gradient in periventricular layers of the developing nervous system. In adult, expressed in scattered cells throughout the brain.

It localises to the cell membrane. In terms of biological role, member of the repulsive guidance molecule (RGM) family that performs several functions in the developing and adult nervous system. Regulates cephalic neural tube closure, inhibits neurite outgrowth and cortical neuron branching, and the formation of mature synapses. Binding to its receptor NEO1/neogenin induces activation of RHOA-ROCK1/Rho-kinase signaling pathway through UNC5B-ARHGEF12/LARG-PTK2/FAK1 cascade, leading to collapse of the neuronal growth cone and neurite outgrowth inhibition. Furthermore, RGMA binding to NEO1/neogenin leads to HRAS inactivation by influencing HRAS-PTK2/FAK1-AKT1 pathway. It also functions as a bone morphogenetic protein (BMP) coreceptor that may signal through SMAD1, SMAD5, and SMAD8. The protein is Repulsive guidance molecule A (Rgma) of Mus musculus (Mouse).